Consider the following 511-residue polypeptide: V-type proton ATPase subunit B (511 aa).

Position 381 (R381) interacts with ATP. The tract at residues 484 to 511 (FYGRDREQDDDEEEEEDPDKSGDKLIDA) is disordered. Acidic residues predominate over residues 491 to 501 (QDDDEEEEEDP). A compositionally biased stretch (basic and acidic residues) spans 502-511 (DKSGDKLIDA).

This sequence belongs to the ATPase alpha/beta chains family. As to quaternary structure, V-ATPase is a heteromultimeric enzyme composed of a peripheral catalytic V1 complex (components A to H) attached to an integral membrane V0 proton pore complex (components: a, c, c', c'', d, e, f and VOA1).

It is found in the vacuole membrane. Its function is as follows. Non-catalytic subunit of the V1 complex of vacuolar(H+)-ATPase (V-ATPase), a multisubunit enzyme composed of a peripheral complex (V1) that hydrolyzes ATP and a membrane integral complex (V0) that translocates protons. V-ATPase is responsible for acidifying and maintaining the pH of intracellular compartments. The protein is V-type proton ATPase subunit B (VMA2) of Candida tropicalis (Yeast).